The chain runs to 503 residues: Probable cytosol aminopeptidase (503 aa).

2 residues coordinate Mn(2+): Lys274 and Asp279. Lys286 is an active-site residue. Asp297, Asp356, and Glu358 together coordinate Mn(2+). The active site involves Arg360.

The protein belongs to the peptidase M17 family. The cofactor is Mn(2+).

Its subcellular location is the cytoplasm. It carries out the reaction Release of an N-terminal amino acid, Xaa-|-Yaa-, in which Xaa is preferably Leu, but may be other amino acids including Pro although not Arg or Lys, and Yaa may be Pro. Amino acid amides and methyl esters are also readily hydrolyzed, but rates on arylamides are exceedingly low.. It catalyses the reaction Release of an N-terminal amino acid, preferentially leucine, but not glutamic or aspartic acids.. Functionally, presumably involved in the processing and regular turnover of intracellular proteins. Catalyzes the removal of unsubstituted N-terminal amino acids from various peptides. The chain is Probable cytosol aminopeptidase from Burkholderia orbicola (strain AU 1054).